A 1165-amino-acid polypeptide reads, in one-letter code: Chitin synthase 3 (1165 aa).

The Cytoplasmic portion of the chain corresponds to M1–Q170. Disordered stretches follow at residues D19–D53 and P74–R97. Polar residues predominate over residues P74–S92. K136 is covalently cross-linked (Glycyl lysine isopeptide (Lys-Gly) (interchain with G-Cter in ubiquitin)). The chain crosses the membrane as a helical span at residues M171 to P191. The Extracellular segment spans residues K192–G340. N-linked (GlcNAc...) asparagine glycosylation is found at N303 and N332. Residues W341–Y354 form a helical membrane-spanning segment. Residues G355–D452 lie on the Cytoplasmic side of the membrane. The chain crosses the membrane as a helical span at residues V453–A473. Topologically, residues C474–K891 are extracellular. Residue S537 is modified to Phosphoserine. T538 carries the phosphothreonine modification. The chain crosses the membrane as a helical span at residues A892–Y910. The Cytoplasmic segment spans residues R911–L1029. Residues I1030 to I1050 traverse the membrane as a helical segment. At V1051 to T1055 the chain is on the extracellular side. The chain crosses the membrane as a helical span at residues P1056–I1076. Residues T1077–A1165 are Cytoplasmic-facing.

This sequence belongs to the chitin synthase family. Class IV subfamily. As to quaternary structure, homodimer. May form higher order oligomers. Seems to interact with BNI4 and SKT5 which link CHS3 to septins. In terms of processing, glycosylated. Palmitoylated by PFA4; required for proper export from the ER.

Its subcellular location is the cell membrane. The protein localises to the bud neck. The protein resides in the cytoplasmic vesicle membrane. It catalyses the reaction [(1-&gt;4)-N-acetyl-beta-D-glucosaminyl](n) + UDP-N-acetyl-alpha-D-glucosamine = [(1-&gt;4)-N-acetyl-beta-D-glucosaminyl](n+1) + UDP + H(+). In terms of biological role, polymerizes chitin, a structural polymer of the cell wall and septum, by transferring the sugar moiety of UDP-GlcNAc to the non-reducing end of the growing chitin polymer. Appears to be responsible for synthesis of the majority of the chitin found in the cell wall periphery. It is involved in the synthesis of the chitin ring that forms in the cell wall just before bud emergence. This ring remains at the base of the bud as the bud grows and ultimately forms part of the bud scar marking the division site on the mother cell. Also catalyzes the synthesis of chitin laid down during mating and spore cell-wall synthesis. The chain is Chitin synthase 3 from Saccharomyces cerevisiae (strain ATCC 204508 / S288c) (Baker's yeast).